The sequence spans 61 residues: Large ribosomal subunit protein uL30 (61 aa).

The protein belongs to the universal ribosomal protein uL30 family. Part of the 50S ribosomal subunit.

The chain is Large ribosomal subunit protein uL30 from Mycobacterium sp. (strain KMS).